The sequence spans 467 residues: NADH-quinone oxidoreductase subunit N 2 (467 aa).

A run of 13 helical transmembrane segments spans residues 1-21 (MSIF…ALFV), 31-51 (VASW…FALG), 66-86 (LSQF…GIAA), 99-119 (FMLL…VELI), 153-173 (ILFG…IIAA), 195-215 (AVIG…LFPF), 231-253 (AAYV…AAFV), 258-280 (EVTT…AALV), 287-307 (LLGF…AAGS), 315-335 (AFYS…VCAI), 357-377 (LAMI…TAGF), 394-414 (WLVI…LSMV), and 434-454 (LIFG…PAPL).

It belongs to the complex I subunit 2 family. NDH-1 is composed of 14 different subunits. Subunits NuoA, H, J, K, L, M, N constitute the membrane sector of the complex.

It localises to the cell inner membrane. It catalyses the reaction a quinone + NADH + 5 H(+)(in) = a quinol + NAD(+) + 4 H(+)(out). In terms of biological role, NDH-1 shuttles electrons from NADH, via FMN and iron-sulfur (Fe-S) centers, to quinones in the respiratory chain. The immediate electron acceptor for the enzyme in this species is believed to be ubiquinone. Couples the redox reaction to proton translocation (for every two electrons transferred, four hydrogen ions are translocated across the cytoplasmic membrane), and thus conserves the redox energy in a proton gradient. This chain is NADH-quinone oxidoreductase subunit N 2, found in Solidesulfovibrio magneticus (strain ATCC 700980 / DSM 13731 / RS-1) (Desulfovibrio magneticus).